The sequence spans 67 residues: DNA-directed RNA polymerase subunit omega (67 aa).

The protein belongs to the RNA polymerase subunit omega family. In terms of assembly, the RNAP catalytic core consists of 2 alpha, 1 beta, 1 beta' and 1 omega subunit. When a sigma factor is associated with the core the holoenzyme is formed, which can initiate transcription.

It catalyses the reaction RNA(n) + a ribonucleoside 5'-triphosphate = RNA(n+1) + diphosphate. In terms of biological role, promotes RNA polymerase assembly. Latches the N- and C-terminal regions of the beta' subunit thereby facilitating its interaction with the beta and alpha subunits. This chain is DNA-directed RNA polymerase subunit omega, found in Ralstonia pickettii (strain 12J).